The primary structure comprises 254 residues: MSLTNKNVVFVAGLGGIGLDTSRELVKRNLKNLVILDRIDNPAAIAELKAINPKVTITFYPYDVTVPVAETTKLLKTIFAQVKTIDVLINGAGILDDHQIERTIAVNYTGLVNTTTAILDFWDKRKGGPGGIICNIGSVTGFNAIYQVPVYSGSKAAVVNFTSSLAKLAPITGVTAYTVNPGITKTTLVHKFNSWLDVEPRVAEKLLEHPTQTSQQCAENFVKAIELNKNGAIWKLDLGTLEPITWTQHWDSGI.

10 to 33 is an NAD(+) binding site; the sequence is FVAGLGGIGLDTSRELVKRNLKNL. Residue Ser138 coordinates substrate. Tyr151 functions as the Proton acceptor in the catalytic mechanism.

The protein belongs to the short-chain dehydrogenases/reductases (SDR) family. Homodimer.

It carries out the reaction a primary alcohol + NAD(+) = an aldehyde + NADH + H(+). The catalysed reaction is a secondary alcohol + NAD(+) = a ketone + NADH + H(+). This is Alcohol dehydrogenase (Adh) from Drosophila pseudoobscura pseudoobscura (Fruit fly).